The sequence spans 265 residues: MKFIIEALKRVRERRPLVHNITNFVVMNTTANALLALGASPVMAHAEEELEEMIRLADAVVINIGTLDSGWRRSMVKATEIANELGKPIVLDPVGAGATKFRTRVSLEILSRGVDVLKGNFGEISALLGEEGKTRGVDSLEYGEEEAKKLTMNAAREFNTTVAVTGAVDYVSDGRRTFAVYNGHELLGRVTGTGCMVAALTGAFVAVTEPLKATTSALVTFGIAAEKAYEEAKYPGSFHVKLYDWLYRINENVIRTYAKVREVEL.

M43 provides a ligand contact to substrate. Residues K118 and T165 each coordinate ATP. G192 provides a ligand contact to substrate.

Belongs to the Thz kinase family. The cofactor is Mg(2+).

It carries out the reaction 5-(2-hydroxyethyl)-4-methylthiazole + ATP = 4-methyl-5-(2-phosphooxyethyl)-thiazole + ADP + H(+). It participates in cofactor biosynthesis; thiamine diphosphate biosynthesis; 4-methyl-5-(2-phosphoethyl)-thiazole from 5-(2-hydroxyethyl)-4-methylthiazole: step 1/1. Catalyzes the phosphorylation of the hydroxyl group of 4-methyl-5-beta-hydroxyethylthiazole (THZ). This Pyrococcus horikoshii (strain ATCC 700860 / DSM 12428 / JCM 9974 / NBRC 100139 / OT-3) protein is Hydroxyethylthiazole kinase.